A 361-amino-acid chain; its full sequence is Chorismate synthase (361 aa).

The segment at 37–59 is disordered; that stretch reads TEADLQHDLDRRRPGTSRYTTQR. Basic and acidic residues predominate over residues 40-49; it reads DLQHDLDRRR. Arg48 and Arg54 together coordinate NADP(+). FMN contacts are provided by residues 125–127, 238–239, Gly278, 293–297, and Arg319; these read RSS, NA, and KPTSS.

Belongs to the chorismate synthase family. As to quaternary structure, homotetramer. FMNH2 is required as a cofactor.

It carries out the reaction 5-O-(1-carboxyvinyl)-3-phosphoshikimate = chorismate + phosphate. It functions in the pathway metabolic intermediate biosynthesis; chorismate biosynthesis; chorismate from D-erythrose 4-phosphate and phosphoenolpyruvate: step 7/7. Functionally, catalyzes the anti-1,4-elimination of the C-3 phosphate and the C-6 proR hydrogen from 5-enolpyruvylshikimate-3-phosphate (EPSP) to yield chorismate, which is the branch point compound that serves as the starting substrate for the three terminal pathways of aromatic amino acid biosynthesis. This reaction introduces a second double bond into the aromatic ring system. The sequence is that of Chorismate synthase from Serratia proteamaculans (strain 568).